The following is a 475-amino-acid chain: Putative amidase AmiD (475 aa).

Active-site charge relay system residues include K93 and S166. S190 (acyl-ester intermediate) is an active-site residue.

This sequence belongs to the amidase family.

The enzyme catalyses a monocarboxylic acid amide + H2O = a monocarboxylate + NH4(+). This Mycobacterium bovis (strain ATCC BAA-935 / AF2122/97) protein is Putative amidase AmiD (amiD).